A 114-amino-acid polypeptide reads, in one-letter code: Lymphotactin (114 aa).

The signal sequence occupies residues 1-21 (MRLLLLTFLGVCCFAAWVVEG). Residues Cys-32 and Cys-69 are joined by a disulfide bond. The tract at residues 87-114 (RASASKSKAETIPTQAQRSASTAVTLTG) is disordered. Polar residues predominate over residues 98–114 (IPTQAQRSASTAVTLTG).

The protein belongs to the intercrine gamma family.

Its subcellular location is the secreted. Chemotactic activity for lymphocytes but not for monocytes or neutrophils. In thymus, mediates medullary accumulation of thymic dendritic cells and contributes to regulatoy T cell development, playing a role in self-tolerance establishment. This is Lymphotactin (Xcl1) from Rattus norvegicus (Rat).